The sequence spans 771 residues: MAHITSWHYGNAIALLVSLAPGALSLNTFPDCSSGPLSKLAVCDTSLDVTTRAQSLVNAMTFEEKVNNTQYNSPGVPRLGLPAYNWWSEALHGVAGSPGVEFADSGPFSYATSFPQPILLGATFDDDLIKQVATVVSTEGRAFGNAGRSGLDFWTPNINPFRDARWGRGQETPGEDPLHVSRYVYHLVDGLQNGIGPANPKVVATCKHFAAYDLEDWNGVVRHSFNAEVSTQDLSEFYLPPFKSCARDARVDAVMCSYNALNGVPACADSYLLQTILREHWKWDEPGRWITSDCGAIDDIYNGHNFTTTPAEAAATALNAGTDLDCGTVFPKYLGQAADEGLYSNQTLDRALVRLYSSLVKLGYFDPAEDQPYRSIGWTDVDTPAAEALAHKAAGEGIVLLKNDKTLPLKAKGTLALIGPYANATKQMQGNYEGPAKYIRTLLWAATQAGYDVKYAAGTAINTNSTAGFDAALSAAKQADVVVYAGGIDNTIEAEGRDRTTIAWPGNQVNLIDQLSKIGKPLVVVQFGGGQVDDSSLLSNPRVNALLWAGYPSQEGGSAIFDILTGKTAPAGRLPVTQYPADYVNQVPMTDMALRPGSNTPGRTYRWYDKAVLPFGFGLHYTTFKISWPRRALGPYNTAALVSRSPKNVPIDRAAFDTFHIQVTNTGKTTSDYVALLFLKTTDAGPKPYPLKTLVGYTRAKQIKPGEKRSVDIEVSLGSLARTAENGDLVLYPGRYTLEVDVGESQYPTASFTVTGKETILDSFPQPPKTR.

The N-terminal stretch at 1 to 25 (MAHITSWHYGNAIALLVSLAPGALS) is a signal peptide. N67 carries an N-linked (GlcNAc...) asparagine glycan. D293 is a catalytic residue. N-linked (GlcNAc...) asparagine glycans are attached at residues N305, N345, N423, and N464.

The protein belongs to the glycosyl hydrolase 3 family.

The protein resides in the secreted. It catalyses the reaction Hydrolysis of (1-&gt;4)-beta-D-xylans, to remove successive D-xylose residues from the non-reducing termini.. It functions in the pathway glycan degradation; xylan degradation. Its function is as follows. Xylan 1,4-beta-xylosidase involved in the hydrolysis of xylan, a major structural heterogeneous polysaccharide found in plant biomass representing the second most abundant polysaccharide in the biosphere, after cellulose. This Aspergillus fumigatus (strain CBS 144.89 / FGSC A1163 / CEA10) (Neosartorya fumigata) protein is Probable exo-1,4-beta-xylosidase bxlB (bxlB).